Reading from the N-terminus, the 328-residue chain is MAAGTAARKAAPVLEAPPQQEQLSHTKLSAEDTWNLQQERMYKMHRGHDSMHVEMILIFLCVLVIAQIVLVQWRQRHGRSYNLVTLLQMWVVPLYFTIKLYWWRFLSMWGMFSVITSYILFRATRKPLSGRTPRLVYKWFLLIYKLSYAFGVVGYLAIMFTMCGFNLFFKIKARDSMDFGIVSLFYGLYYGVMGRDFAEICSDYMASTIGFYSVSRLPTRSLSDNICAVCGQKIIVELDEEGLIENTYQLSCNHVFHEFCIRGWCIVGKKQTCPYCKEKVDLKRMISNPWERTHFLYGQILDWLRYLVAWQPVVIGIVQGIIYSLGLE.

Helical transmembrane passes span 51–71 (MHVEMILIFLCVLVIAQIVLV), 83–103 (LVTLLQMWVVPLYFTIKLYWW), 104–121 (RFLSMWGMFSVITSYILF), 149–169 (AFGVVGYLAIMFTMCGFNLFF), and 180–200 (GIVSLFYGLYYGVMGRDFAEI). The RING-type; atypical zinc finger occupies 227–277 (CAVCGQKIIVELDEEGLIENTYQLSCNHVFHEFCIRGWCIVGKKQTCPYCK).

The protein localises to the membrane. The polypeptide is RING finger protein 175 (RNF175) (Homo sapiens (Human)).